The chain runs to 223 residues: Ribose-5-phosphate isomerase A (223 aa).

Substrate-binding positions include 28–31, 81–84, and 94–97; these read TGTT, DSAD, and KGGG. The active-site Proton acceptor is Glu103. Lys121 provides a ligand contact to substrate.

This sequence belongs to the ribose 5-phosphate isomerase family. Homodimer.

The enzyme catalyses aldehydo-D-ribose 5-phosphate = D-ribulose 5-phosphate. It functions in the pathway carbohydrate degradation; pentose phosphate pathway; D-ribose 5-phosphate from D-ribulose 5-phosphate (non-oxidative stage): step 1/1. In terms of biological role, catalyzes the reversible conversion of ribose-5-phosphate to ribulose 5-phosphate. The protein is Ribose-5-phosphate isomerase A of Buchnera aphidicola subsp. Acyrthosiphon pisum (strain 5A).